Consider the following 201-residue polypeptide: Pyridoxal 5'-phosphate synthase subunit PdxT (201 aa).

48–50 (GES) provides a ligand contact to L-glutamine. Cysteine 80 (nucleophile) is an active-site residue. L-glutamine contacts are provided by residues arginine 109 and 137 to 138 (IR). Catalysis depends on charge relay system residues histidine 180 and glutamate 182.

This sequence belongs to the glutaminase PdxT/SNO family. As to quaternary structure, in the presence of PdxS, forms a dodecamer of heterodimers. Only shows activity in the heterodimer.

The enzyme catalyses aldehydo-D-ribose 5-phosphate + D-glyceraldehyde 3-phosphate + L-glutamine = pyridoxal 5'-phosphate + L-glutamate + phosphate + 3 H2O + H(+). It catalyses the reaction L-glutamine + H2O = L-glutamate + NH4(+). The protein operates within cofactor biosynthesis; pyridoxal 5'-phosphate biosynthesis. Functionally, catalyzes the hydrolysis of glutamine to glutamate and ammonia as part of the biosynthesis of pyridoxal 5'-phosphate. The resulting ammonia molecule is channeled to the active site of PdxS. The sequence is that of Pyridoxal 5'-phosphate synthase subunit PdxT from Cutibacterium acnes (strain DSM 16379 / KPA171202) (Propionibacterium acnes).